Reading from the N-terminus, the 491-residue chain is MTVHFPFQNSYSALPDSFFARVAPTPVAAPRLIKLNRPLAVQLGLDPNMLETPEGAEILAGKTVPDGADPIAMAYAGHQFGQFVPQLGDGRAILLGEVIDRDGVRRDIQLKGSGPTPFSRRGDGRAALGPVLREYIVSEAMYALGIPTTRSLAAVVTGEHVIRETALPGAVLTRVAASHIRVGTFQFFAVRRDTDAIRRLADHVIARHYPELLGTERPYHALLAGVVARQAELVARWLLVGFIHGVMNTDNSSISGETIDYGPCAFMDAYNPAQVFSSIDEMGRYAYANQPRIALWNLTRLAECLLPLFGEEQEKAVEQAQDILGAFPETFSKAYQAGLRKKVGLFTERDGDEALIQDLLDAMAKNQADFTLTFRRLGDAAGDPAADDARAEFMDPAAFDEWARRWRERLAAEPQSAAERQTAMNAVNPLFIPRNHRVEAVIQAAVNDDNYALFEELVKVLAKPYEDQPDYAAYADPPLPDQRVLQTFCGT.

G88, G90, R91, K111, D123, G124, R174, and R181 together coordinate ATP. D250 serves as the catalytic Proton acceptor. Positions 251 and 260 each coordinate Mg(2+). Residue D260 participates in ATP binding.

The protein belongs to the SELO family. Mg(2+) serves as cofactor. Requires Mn(2+) as cofactor.

It catalyses the reaction L-seryl-[protein] + ATP = 3-O-(5'-adenylyl)-L-seryl-[protein] + diphosphate. The enzyme catalyses L-threonyl-[protein] + ATP = 3-O-(5'-adenylyl)-L-threonyl-[protein] + diphosphate. It carries out the reaction L-tyrosyl-[protein] + ATP = O-(5'-adenylyl)-L-tyrosyl-[protein] + diphosphate. The catalysed reaction is L-histidyl-[protein] + UTP = N(tele)-(5'-uridylyl)-L-histidyl-[protein] + diphosphate. It catalyses the reaction L-seryl-[protein] + UTP = O-(5'-uridylyl)-L-seryl-[protein] + diphosphate. The enzyme catalyses L-tyrosyl-[protein] + UTP = O-(5'-uridylyl)-L-tyrosyl-[protein] + diphosphate. Functionally, nucleotidyltransferase involved in the post-translational modification of proteins. It can catalyze the addition of adenosine monophosphate (AMP) or uridine monophosphate (UMP) to a protein, resulting in modifications known as AMPylation and UMPylation. In Bradyrhizobium diazoefficiens (strain JCM 10833 / BCRC 13528 / IAM 13628 / NBRC 14792 / USDA 110), this protein is Protein nucleotidyltransferase YdiU.